The primary structure comprises 525 residues: Mitogen-activated protein kinase kinase 5 (525 aa).

In terms of domain architecture, Protein kinase spans 59–317 (ETEGGFLGKG…CTELLRHPFI (259 aa)). ATP is bound by residues 65–73 (LGKGSSGSV) and Lys-88. The Proton acceptor role is filled by Asp-178. A compositionally biased stretch (low complexity) spans 358–367 (SALPLASEGG). Disordered regions lie at residues 358–392 (SALP…ERHD) and 438–468 (SASV…AQHR).

This sequence belongs to the protein kinase superfamily. STE Ser/Thr protein kinase family. MAP kinase kinase subfamily. Requires Mg(2+) as cofactor.

The enzyme catalyses L-tyrosyl-[protein] + ATP = O-phospho-L-tyrosyl-[protein] + ADP + H(+). The catalysed reaction is L-seryl-[protein] + ATP = O-phospho-L-seryl-[protein] + ADP + H(+). It carries out the reaction L-threonyl-[protein] + ATP = O-phospho-L-threonyl-[protein] + ADP + H(+). In terms of biological role, protein kinase which phosphorylates and activates MPK4 in vitro. In Leishmania mexicana, this protein is Mitogen-activated protein kinase kinase 5.